Consider the following 122-residue polypeptide: Large ribosomal subunit protein uL14 (122 aa).

This sequence belongs to the universal ribosomal protein uL14 family. As to quaternary structure, part of the 50S ribosomal subunit. Forms a cluster with proteins L3 and L19. In the 70S ribosome, L14 and L19 interact and together make contacts with the 16S rRNA in bridges B5 and B8.

In terms of biological role, binds to 23S rRNA. Forms part of two intersubunit bridges in the 70S ribosome. This is Large ribosomal subunit protein uL14 from Mycobacterium leprae (strain TN).